The primary structure comprises 1167 residues: mRNA 3'-end-processing protein rna-14 (1167 aa).

The disordered stretch occupies residues 1 to 245 (MSDDYDPTNI…DPTPVTQPAP (245 aa)). Acidic residues-rich tracts occupy residues 16–26 (EEQEDYGEADG) and 70–79 (NTDDVGDDYD). Residues 102 to 111 (TAPQPAAPVA) are compositionally biased toward low complexity. The span at 124-137 (DSDDEDEDGDDDGE) shows a compositional bias: acidic residues. 2 stretches are compositionally biased toward low complexity: residues 138 to 150 (PQQQ…QQQP) and 159 to 191 (GSGA…PQTA). Positions 192 to 218 (TLTVQDNAGATTFNAPPVPQQVSHQSG) are enriched in polar residues. A compositionally biased stretch (low complexity) spans 219 to 245 (ATTAAVPTTPSSAAPAVDPTPVTQPAP). 6 HAT repeats span residues 277-309 (NDID…LELS), 311-342 (NNFP…YIRR), 352-387 (QARQ…FIKF), 401-434 (QKMD…FEMG), 471-504 (TNLP…WEKS), and 518-550 (LYQK…WCFD). Residues 882-893 (QQQPQLPMSQRD) are compositionally biased toward polar residues. 2 disordered regions span residues 882–980 (QQQP…SGAG) and 1075–1167 (AYRE…PPPY). Residues 908 to 922 (SPSAGPGAPFAPYAA) are compositionally biased toward low complexity. The segment covering 924–946 (RPLDDRDYDDHPRKIARSEHDPF) has biased composition (basic and acidic residues). Over residues 969-979 (GAAGAYSGSGA) the composition is skewed to gly residues. Over residues 1079 to 1090 (SPGPLGGRPLSP) the composition is skewed to low complexity. Over residues 1121–1134 (EPPPAAQYGVPPPA) the composition is skewed to pro residues. Residues 1135–1151 (QYDGGWAQQQQQQQYGQ) show a composition bias toward low complexity.

Its subcellular location is the nucleus. It localises to the cytoplasm. In terms of biological role, component of the cleavage factor IA (CFIA) complex, which is involved in the endonucleolytic cleavage during polyadenylation-dependent pre-mRNA 3'-end formation. In Neurospora crassa (strain ATCC 24698 / 74-OR23-1A / CBS 708.71 / DSM 1257 / FGSC 987), this protein is mRNA 3'-end-processing protein rna-14 (rna-14).